Here is a 96-residue protein sequence, read N- to C-terminus: Small ribosomal subunit protein bS16 (96 aa).

It belongs to the bacterial ribosomal protein bS16 family.

The polypeptide is Small ribosomal subunit protein bS16 (Anaplasma phagocytophilum (strain HZ)).